The chain runs to 429 residues: GTPase Obg (429 aa).

The region spanning 1 to 158 (MFYDTAKIYV…RWLLLELKLL (158 aa)) is the Obg domain. The OBG-type G domain maps to 159–329 (ADVGLVGYPN…LIYRLWEIIS (171 aa)). GTP is bound by residues 165–172 (GYPNAGKS), 190–194 (FTTLT), 212–215 (DIPG), 282–285 (NKMD), and 310–312 (SAL). 2 residues coordinate Mg(2+): Ser-172 and Thr-192. One can recognise an OCT domain in the interval 344–421 (IKEQPEEGFV…IGKFEFYFVD (78 aa)).

The protein belongs to the TRAFAC class OBG-HflX-like GTPase superfamily. OBG GTPase family. Monomer. Requires Mg(2+) as cofactor.

The protein resides in the cytoplasm. Its function is as follows. An essential GTPase which binds GTP, GDP and possibly (p)ppGpp with moderate affinity, with high nucleotide exchange rates and a fairly low GTP hydrolysis rate. Plays a role in control of the cell cycle, stress response, ribosome biogenesis and in those bacteria that undergo differentiation, in morphogenesis control. The polypeptide is GTPase Obg (Carboxydothermus hydrogenoformans (strain ATCC BAA-161 / DSM 6008 / Z-2901)).